We begin with the raw amino-acid sequence, 280 residues long: 4-deoxy-L-threo-5-hexosulose-uronate ketol-isomerase 1 (280 aa).

Zn(2+) contacts are provided by His-198, His-200, Glu-205, and His-247.

Belongs to the KduI family. The cofactor is Zn(2+).

The enzyme catalyses 5-dehydro-4-deoxy-D-glucuronate = 3-deoxy-D-glycero-2,5-hexodiulosonate. It participates in glycan metabolism; pectin degradation; 2-dehydro-3-deoxy-D-gluconate from pectin: step 4/5. Catalyzes the isomerization of 5-dehydro-4-deoxy-D-glucuronate to 3-deoxy-D-glycero-2,5-hexodiulosonate. This Rhizobium meliloti (strain 1021) (Ensifer meliloti) protein is 4-deoxy-L-threo-5-hexosulose-uronate ketol-isomerase 1 (kduI1).